The primary structure comprises 197 residues: Imidazoleglycerol-phosphate dehydratase (197 aa).

Belongs to the imidazoleglycerol-phosphate dehydratase family.

It is found in the cytoplasm. It carries out the reaction D-erythro-1-(imidazol-4-yl)glycerol 3-phosphate = 3-(imidazol-4-yl)-2-oxopropyl phosphate + H2O. It participates in amino-acid biosynthesis; L-histidine biosynthesis; L-histidine from 5-phospho-alpha-D-ribose 1-diphosphate: step 6/9. The chain is Imidazoleglycerol-phosphate dehydratase from Pseudomonas entomophila (strain L48).